The primary structure comprises 474 residues: Cysteine--tRNA ligase (474 aa).

Cys-27 contacts Zn(2+). Residues 29-39 carry the 'HIGH' region motif; sequence PTVYNYIHIGN. Cys-212, His-237, and Glu-241 together coordinate Zn(2+). The 'KMSKS' region signature appears at 271 to 275; the sequence is KMSKS. ATP is bound at residue Lys-274.

Belongs to the class-I aminoacyl-tRNA synthetase family. Monomer. The cofactor is Zn(2+).

Its subcellular location is the cytoplasm. The enzyme catalyses tRNA(Cys) + L-cysteine + ATP = L-cysteinyl-tRNA(Cys) + AMP + diphosphate. The polypeptide is Cysteine--tRNA ligase (Lactobacillus delbrueckii subsp. bulgaricus (strain ATCC 11842 / DSM 20081 / BCRC 10696 / JCM 1002 / NBRC 13953 / NCIMB 11778 / NCTC 12712 / WDCM 00102 / Lb 14)).